Reading from the N-terminus, the 74-residue chain is Translation initiation factor IF-1, chloroplastic (74 aa).

Residues 1 to 72 form the S1-like domain; sequence MERQNLIEME…TKGRITYRLR (72 aa).

Belongs to the IF-1 family. As to quaternary structure, component of the 30S ribosomal translation pre-initiation complex which assembles on the 30S ribosome in the order IF-2 and IF-3, IF-1 and N-formylmethionyl-tRNA(fMet); mRNA recruitment can occur at any time during PIC assembly.

The protein resides in the plastid. The protein localises to the chloroplast. In terms of biological role, one of the essential components for the initiation of protein synthesis. Stabilizes the binding of IF-2 and IF-3 on the 30S subunit to which N-formylmethionyl-tRNA(fMet) subsequently binds. Helps modulate mRNA selection, yielding the 30S pre-initiation complex (PIC). Upon addition of the 50S ribosomal subunit IF-1, IF-2 and IF-3 are released leaving the mature 70S translation initiation complex. The polypeptide is Translation initiation factor IF-1, chloroplastic (Mesostigma viride (Green alga)).